The primary structure comprises 173 residues: Cell division protein SepF (173 aa).

A disordered region spans residues Ser-17 to His-85. The span at Ser-35–Ala-52 shows a compositional bias: low complexity.

The protein belongs to the SepF family. Homodimer. Interacts with FtsZ.

The protein localises to the cytoplasm. Cell division protein that is part of the divisome complex and is recruited early to the Z-ring. Probably stimulates Z-ring formation, perhaps through the cross-linking of FtsZ protofilaments. Its function overlaps with FtsA. In Kocuria rhizophila (strain ATCC 9341 / DSM 348 / NBRC 103217 / DC2201), this protein is Cell division protein SepF.